The chain runs to 318 residues: Ribosomal protein L11 methyltransferase (318 aa).

Threonine 159, glycine 180, aspartate 202, and asparagine 253 together coordinate S-adenosyl-L-methionine.

This sequence belongs to the methyltransferase superfamily. PrmA family.

Its subcellular location is the cytoplasm. The catalysed reaction is L-lysyl-[protein] + 3 S-adenosyl-L-methionine = N(6),N(6),N(6)-trimethyl-L-lysyl-[protein] + 3 S-adenosyl-L-homocysteine + 3 H(+). Functionally, methylates ribosomal protein L11. The sequence is that of Ribosomal protein L11 methyltransferase from Lachnospira eligens (strain ATCC 27750 / DSM 3376 / VPI C15-48 / C15-B4) (Eubacterium eligens).